A 513-amino-acid chain; its full sequence is Histidine ammonia-lyase (513 aa).

The 5-imidazolinone (Ala-Gly) cross-link spans 144–146 (ASG). Ser-145 is modified (2,3-didehydroalanine (Ser)).

This sequence belongs to the PAL/histidase family. Contains an active site 4-methylidene-imidazol-5-one (MIO), which is formed autocatalytically by cyclization and dehydration of residues Ala-Ser-Gly.

The protein localises to the cytoplasm. The enzyme catalyses L-histidine = trans-urocanate + NH4(+). It functions in the pathway amino-acid degradation; L-histidine degradation into L-glutamate; N-formimidoyl-L-glutamate from L-histidine: step 1/3. In Streptococcus pyogenes serotype M18 (strain MGAS8232), this protein is Histidine ammonia-lyase.